Here is a 213-residue protein sequence, read N- to C-terminus: Uracil phosphoribosyltransferase (213 aa).

5-phospho-alpha-D-ribose 1-diphosphate-binding positions include Arg-78, Arg-103, and 130 to 138 (DPMLATGGS). Residues Ile-193 and 198–200 (GDA) each bind uracil. Asp-199 serves as a coordination point for 5-phospho-alpha-D-ribose 1-diphosphate.

The protein belongs to the UPRTase family. Mg(2+) serves as cofactor.

The catalysed reaction is UMP + diphosphate = 5-phospho-alpha-D-ribose 1-diphosphate + uracil. It participates in pyrimidine metabolism; UMP biosynthesis via salvage pathway; UMP from uracil: step 1/1. Allosterically activated by GTP. Catalyzes the conversion of uracil and 5-phospho-alpha-D-ribose 1-diphosphate (PRPP) to UMP and diphosphate. The polypeptide is Uracil phosphoribosyltransferase (Bordetella bronchiseptica (strain ATCC BAA-588 / NCTC 13252 / RB50) (Alcaligenes bronchisepticus)).